Reading from the N-terminus, the 415-residue chain is Mitochondrial distribution and morphology protein 12 (415 aa).

In terms of domain architecture, SMP-LTD spans 1-402 (MSFDINWSEL…WPSWVCFDLN (402 aa)). Residues 53–146 (EITIRHIGDP…PPLTDLRRSR (94 aa)) form a disordered region. Composition is skewed to acidic residues over residues 62–75 (PFDDFYEDEGDDDE) and 92–103 (NSSDDDEDDEYD).

It belongs to the MDM12 family. In terms of assembly, component of the ER-mitochondria encounter structure (ERMES) or MDM complex, composed of MMM1, MDM10, MDM12 and MDM34. An MMM1 homodimer associates with one molecule of MDM12 on each side in a pairwise head-to-tail manner, and the SMP-LTD domains of MMM1 and MDM12 generate a continuous hydrophobic tunnel for phospholipid trafficking.

The protein localises to the mitochondrion outer membrane. It is found in the endoplasmic reticulum membrane. Component of the ERMES/MDM complex, which serves as a molecular tether to connect the endoplasmic reticulum (ER) and mitochondria. Components of this complex are involved in the control of mitochondrial shape and protein biogenesis, and function in nonvesicular lipid trafficking between the ER and mitochondria. MDM12 is required for the interaction of the ER-resident membrane protein MMM1 and the outer mitochondrial membrane-resident beta-barrel protein MDM10. The MDM12-MMM1 subcomplex functions in the major beta-barrel assembly pathway that is responsible for biogenesis of all mitochondrial outer membrane beta-barrel proteins, and acts in a late step after the SAM complex. The MDM10-MDM12-MMM1 subcomplex further acts in the TOM40-specific pathway after the action of the MDM12-MMM1 complex. Essential for establishing and maintaining the structure of mitochondria and maintenance of mtDNA nucleoids. This Debaryomyces hansenii (strain ATCC 36239 / CBS 767 / BCRC 21394 / JCM 1990 / NBRC 0083 / IGC 2968) (Yeast) protein is Mitochondrial distribution and morphology protein 12.